Consider the following 490-residue polypeptide: B3 domain-containing protein REM14 (490 aa).

3 consecutive DNA-binding regions (TF-B3) follow at residues 3 to 95 (NQHF…LGPS), 130 to 226 (CFSA…LPKG), and 236 to 333 (CFVA…LSNE). The interval 343 to 367 (NEVESLSTDQESHEESSHNEKISRR) is disordered. Residues 352-364 (QESHEESSHNEKI) are compositionally biased toward basic and acidic residues. The TF-B3 4 DNA-binding region spans 387-484 (FVTLNLTPYN…TSCVLKFCSK (98 aa)).

The protein resides in the nucleus. The protein is B3 domain-containing protein REM14 (REM14) of Arabidopsis thaliana (Mouse-ear cress).